The primary structure comprises 396 residues: NADH-quinone oxidoreductase subunit D (396 aa).

This sequence belongs to the complex I 49 kDa subunit family. As to quaternary structure, NDH-1 is composed of 14 different subunits. Subunits NuoB, C, D, E, F, and G constitute the peripheral sector of the complex.

It localises to the cell inner membrane. It carries out the reaction a quinone + NADH + 5 H(+)(in) = a quinol + NAD(+) + 4 H(+)(out). Its function is as follows. NDH-1 shuttles electrons from NADH, via FMN and iron-sulfur (Fe-S) centers, to quinones in the respiratory chain. The immediate electron acceptor for the enzyme in this species is believed to be ubiquinone. Couples the redox reaction to proton translocation (for every two electrons transferred, four hydrogen ions are translocated across the cytoplasmic membrane), and thus conserves the redox energy in a proton gradient. The chain is NADH-quinone oxidoreductase subunit D from Rhodopseudomonas palustris (strain BisA53).